The sequence spans 215 residues: 3-isopropylmalate dehydratase small subunit (215 aa).

This sequence belongs to the LeuD family. LeuD type 1 subfamily. As to quaternary structure, heterodimer of LeuC and LeuD.

It catalyses the reaction (2R,3S)-3-isopropylmalate = (2S)-2-isopropylmalate. It functions in the pathway amino-acid biosynthesis; L-leucine biosynthesis; L-leucine from 3-methyl-2-oxobutanoate: step 2/4. Catalyzes the isomerization between 2-isopropylmalate and 3-isopropylmalate, via the formation of 2-isopropylmaleate. The chain is 3-isopropylmalate dehydratase small subunit from Chromohalobacter salexigens (strain ATCC BAA-138 / DSM 3043 / CIP 106854 / NCIMB 13768 / 1H11).